The chain runs to 95 residues: Large ribosomal subunit protein uL23 (95 aa).

The protein belongs to the universal ribosomal protein uL23 family. Part of the 50S ribosomal subunit. Contacts protein L29, and trigger factor when it is bound to the ribosome.

Functionally, one of the early assembly proteins it binds 23S rRNA. One of the proteins that surrounds the polypeptide exit tunnel on the outside of the ribosome. Forms the main docking site for trigger factor binding to the ribosome. The chain is Large ribosomal subunit protein uL23 from Desulfitobacterium hafniense (strain Y51).